The following is a 217-amino-acid chain: Large ribosomal subunit protein uL1 (217 aa).

Position 2 is an N-acetylserine (Ser-2). Residue Tyr-11 is modified to Phosphotyrosine. 2 positions are modified to N6-acetyllysine: Lys-91 and Lys-106. Position 118 is an N6-acetyllysine; alternate (Lys-118). Lys-118 participates in a covalent cross-link: Glycyl lysine isopeptide (Lys-Gly) (interchain with G-Cter in SUMO1); alternate. Lys-118 is covalently cross-linked (Glycyl lysine isopeptide (Lys-Gly) (interchain with G-Cter in SUMO2); alternate). Lys-161 participates in a covalent cross-link: Glycyl lysine isopeptide (Lys-Gly) (interchain with G-Cter in SUMO2).

The protein belongs to the universal ribosomal protein uL1 family. In terms of assembly, component of the large ribosomal subunit.

It localises to the cytoplasm. Component of the large ribosomal subunit. The ribosome is a large ribonucleoprotein complex responsible for the synthesis of proteins in the cell. The protein is Large ribosomal subunit protein uL1 (RPL10A) of Bos taurus (Bovine).